We begin with the raw amino-acid sequence, 547 residues long: Isoflavonoid 7-O-beta-apiosyl-glucoside beta-glycosidase (547 aa).

The first 31 residues, 1–31, serve as a signal peptide directing secretion; it reads MHAMTFKAILLLGLLALVSTSASIAFAKEVR. Q59 serves as a coordination point for a beta-D-glucoside. N-linked (GlcNAc...) asparagine glycans are attached at residues N72 and N132. H159 contacts a beta-D-glucoside. The N-linked (GlcNAc...) asparagine glycan is linked to N175. 204–205 is a binding site for a beta-D-glucoside; sequence NE. The Proton donor role is filled by E205. A disulfide bridge links C224 with C232. N285 is a glycosylation site (N-linked (GlcNAc...) asparagine). A beta-D-glucoside contacts are provided by residues Y348, E419, W468, 475–476, and F484; that span reads EW. The active-site Nucleophile is the E419. N-linked (GlcNAc...) asparagine glycosylation is present at N490.

It belongs to the glycosyl hydrolase 1 family. In terms of assembly, homotetramer.

The catalysed reaction is 7-[beta-D-apiofuranosyl-(1-&gt;6)-beta-D-glucopyranosyloxy]isoflavonoid + H2O = a 7-hydroxyisoflavonoid + beta-D-apiofuranosyl-(1-&gt;6)-D-glucose.. With respect to regulation, not inhibited by iron, calcium, mercury, manganese, zinc or EDTA. Hydrolyzes dalpatein 7-O-beta-D-apiofuranosyl-(1-&gt;6)-beta-D-glucopyranoside and dalnigrein 7-O-beta-D-apiofuranosyl-(1-&gt;6)-beta-D-glucopyranoside. Also has activity towards pNP-beta-D-fucoside and pNP-beta-D-glucoside, but not pNP-beta-cellobioside. In Dalbergia nigrescens (Thai blackwood), this protein is Isoflavonoid 7-O-beta-apiosyl-glucoside beta-glycosidase.